A 120-amino-acid chain; its full sequence is ATP-dependent Clp protease adapter protein ClpS (120 aa).

The segment at 1–25 is disordered; it reads MHARSEIRLTFNQDRPQSNEDDGSG.

It belongs to the ClpS family. In terms of assembly, binds to the N-terminal domain of the chaperone ClpA.

Functionally, involved in the modulation of the specificity of the ClpAP-mediated ATP-dependent protein degradation. In Pseudomonas putida (strain W619), this protein is ATP-dependent Clp protease adapter protein ClpS.